The sequence spans 210 residues: MSYAYLFKYIIIGDTGVGKSCLLLQFTDKRFQPVHDLTIGVEFGARMITIDNKPIKLQIWDTAGQESFRSITRSYYRGAAGALLVYDITRRETFNHLASWLEDARQHANANMTIMLVGNKCDLSHRRAVSYEEGEQFAKEHGLIFMEASAKTAQNVEEAFVKTAGAIYKKIQDGVFDVSNESYGIKVGYAIPGQSGGAGSSSSQGGGCCS.

Residue 13–21 (GDTGVGKSC) participates in GTP binding. The Effector region signature appears at 35–43 (HDLTIGVEF). Residues 61-65 (DTAGQ), 119-122 (NKCD), and 149-151 (SAK) contribute to the GTP site. Residues Cys208 and Cys209 are each lipidated (S-geranylgeranyl cysteine).

The protein belongs to the small GTPase superfamily. Rab family.

The protein resides in the endoplasmic reticulum membrane. It is found in the golgi apparatus membrane. Functionally, protein transport. Probably involved in vesicular traffic. This chain is Ras-related protein Rab-2-B (RAB2B), found in Zea mays (Maize).